Here is a 480-residue protein sequence, read N- to C-terminus: Pyruvate kinase II (480 aa).

Residue arginine 36 coordinates substrate. K(+) is bound by residues asparagine 38, serine 40, and aspartate 70. 38-41 (NFSH) is an ATP binding site. ATP-binding residues include arginine 77 and lysine 160. Lysine 223 provides a ligand contact to substrate. Glutamate 225 lines the Mg(2+) pocket. The substrate site is built by glycine 251, aspartate 252, and threonine 284. Aspartate 252 lines the Mg(2+) pocket.

It belongs to the pyruvate kinase family. In terms of assembly, homotetramer. Mg(2+) serves as cofactor. The cofactor is K(+).

The enzyme catalyses pyruvate + ATP = phosphoenolpyruvate + ADP + H(+). It participates in carbohydrate degradation; glycolysis; pyruvate from D-glyceraldehyde 3-phosphate: step 5/5. With respect to regulation, allosterically activated by AMP and by several sugar phosphates. Belongs to type II PK. In terms of biological role, catalyzes the formation of pyruvate in the last step of glycolysis, it is irreversible under physiological conditions. The reaction is critical for the control of metabolic flux in the second part of glycolysis. The sequence is that of Pyruvate kinase II (pykA) from Salmonella typhimurium (strain LT2 / SGSC1412 / ATCC 700720).